A 478-amino-acid polypeptide reads, in one-letter code: Cysteine--tRNA ligase (478 aa).

Cysteine 37 is a Zn(2+) binding site. The 'HIGH' region signature appears at 39–49; the sequence is PTVYHYAHIGN. Zn(2+)-binding residues include cysteine 224, histidine 249, and glutamate 253. The 'KMSKS' region motif lies at 281–285; that stretch reads KMSKS. Lysine 284 contributes to the ATP binding site.

Belongs to the class-I aminoacyl-tRNA synthetase family. As to quaternary structure, monomer. Requires Zn(2+) as cofactor.

It localises to the cytoplasm. It catalyses the reaction tRNA(Cys) + L-cysteine + ATP = L-cysteinyl-tRNA(Cys) + AMP + diphosphate. The protein is Cysteine--tRNA ligase of Protochlamydia amoebophila (strain UWE25).